A 184-amino-acid chain; its full sequence is Inactive ribonuclease-like protein 9 (184 aa).

An N-terminal signal peptide occupies residues M1–Q25. 3 cysteine pairs are disulfide-bonded: C93–C148, C111–C163, and C118–C125. N147 and N179 each carry an N-linked (GlcNAc...) asparagine glycan.

It belongs to the pancreatic ribonuclease family.

Its subcellular location is the secreted. Functionally, does not exhibit any ribonuclease activity. This chain is Inactive ribonuclease-like protein 9 (Rnase9), found in Mus musculus (Mouse).